The primary structure comprises 908 residues: Vacuolar membrane protease (908 aa).

Positions 1–25 (MTSGEEEEGTREQVPVSQPTGTTSI) are disordered. Residues 1–48 (MTSGEEEEGTREQVPVSQPTGTTSIVSTKEKQPNIFIRAIRATFGYRK) lie on the Cytoplasmic side of the membrane. The span at 15–25 (PVSQPTGTTSI) shows a compositional bias: polar residues. Residues 49-69 (TSLTLFVLLTIFFTVAFSSYD) traverse the membrane as a helical segment. At 70–381 (NSLDFTIDLP…FSTSVTTLNT (312 aa)) the chain is on the vacuolar side. N-linked (GlcNAc...) asparagine glycosylation is found at N143 and N162. Zn(2+)-binding residues include H176 and D188. E221 (proton acceptor) is an active-site residue. The Zn(2+) site is built by E222, E247, and H319. N354 is a glycosylation site (N-linked (GlcNAc...) asparagine). A helical membrane pass occupies residues 382–402 (INMVLIVLFPVLSGPLLFITV). The Cytoplasmic portion of the chain corresponds to 403–411 (RYKKWNIGT). A helical membrane pass occupies residues 412-432 (ANLFSLPLAIVITSLVGAVVV). Residues 433 to 449 (NQGFRLVNEFLPASRPM) are Vacuolar-facing. A helical transmembrane segment spans residues 450-470 (LLVTTTTSILLLTYYILLNGI). Residues 471–480 (NFVSPSGDQK) are Cytoplasmic-facing. A helical transmembrane segment spans residues 481 to 501 (LVSIIQISFIYWIALIFVTRG). Residues 502-514 (LSQNAIGDDHTGE) are Vacuolar-facing. The chain crosses the membrane as a helical span at residues 515-535 (FAFTILFLLEATASLFGLIGW). Over 536–602 (TFTRSVKEPT…MQHFGYDWSL (67 aa)) the chain is Cytoplasmic. A disordered region spans residues 543–584 (EPTGDEEPLLNGRMERYVDGSDDEDDVEEEDDEDQSEEENHQ). Acidic residues predominate over residues 562-579 (GSDDEDDVEEEDDEDQSE). Residues 603 to 623 (QFLLIVPISSLVIYNSGWLVI) form a helical membrane-spanning segment. The Vacuolar segment spans residues 624-638 (DGINKSIQESLVAEN). The N-linked (GlcNAc...) asparagine glycan is linked to N627. A helical membrane pass occupies residues 639–659 (FIYLIIQLFSQFWILPILPFV). Over 660–664 (YKLNR) the chain is Cytoplasmic. The chain crosses the membrane as a helical span at residues 665-685 (FMVLGLIAFALVGVTLISSVD). The Vacuolar segment spans residues 686 to 908 (PFNQDNPLKL…LVSLTNRIEV (223 aa)). N752 and N764 each carry an N-linked (GlcNAc...) asparagine glycan.

The protein belongs to the peptidase M28 family. The cofactor is Zn(2+).

It localises to the vacuole membrane. In terms of biological role, may be involved in vacuolar sorting and osmoregulation. The polypeptide is Vacuolar membrane protease (Candida tropicalis (strain ATCC MYA-3404 / T1) (Yeast)).